A 367-amino-acid polypeptide reads, in one-letter code: Protein trichome birefringence-like 39 (367 aa).

Residues 7 to 29 (GNPSFLFFFFFFLCLSTVSAYIN) traverse the membrane as a helical; Signal-anchor for type II membrane protein segment. The GDS motif motif lies at 120–122 (GDS). A DCXHWCLPGXXDXWN motif motif is present at residues 343-357 (DCSHWCLPGLPDTWN).

Belongs to the PC-esterase family. TBL subfamily.

The protein resides in the membrane. Its function is as follows. May act as a bridging protein that binds pectin and other cell wall polysaccharides. Probably involved in maintaining esterification of pectins. May be involved in the specific O-acetylation of cell wall polymers. The polypeptide is Protein trichome birefringence-like 39 (TBL39) (Arabidopsis thaliana (Mouse-ear cress)).